The sequence spans 132 residues: Small ribosomal subunit protein uS8 (132 aa).

This sequence belongs to the universal ribosomal protein uS8 family. In terms of assembly, part of the 30S ribosomal subunit. Contacts proteins S5 and S12.

One of the primary rRNA binding proteins, it binds directly to 16S rRNA central domain where it helps coordinate assembly of the platform of the 30S subunit. The chain is Small ribosomal subunit protein uS8 from Brevibacillus brevis (strain 47 / JCM 6285 / NBRC 100599).